The chain runs to 381 residues: Succinyl-diaminopimelate desuccinylase 1 (381 aa).

Residue His70 coordinates Zn(2+). Asp72 is a catalytic residue. Asp103 lines the Zn(2+) pocket. Glu136 serves as the catalytic Proton acceptor. Residues Glu137, Glu165, and His354 each coordinate Zn(2+).

It belongs to the peptidase M20A family. DapE subfamily. Homodimer. Zn(2+) serves as cofactor. Requires Co(2+) as cofactor.

The enzyme catalyses N-succinyl-(2S,6S)-2,6-diaminopimelate + H2O = (2S,6S)-2,6-diaminopimelate + succinate. It participates in amino-acid biosynthesis; L-lysine biosynthesis via DAP pathway; LL-2,6-diaminopimelate from (S)-tetrahydrodipicolinate (succinylase route): step 3/3. In terms of biological role, catalyzes the hydrolysis of N-succinyl-L,L-diaminopimelic acid (SDAP), forming succinate and LL-2,6-diaminopimelate (DAP), an intermediate involved in the bacterial biosynthesis of lysine and meso-diaminopimelic acid, an essential component of bacterial cell walls. The sequence is that of Succinyl-diaminopimelate desuccinylase 1 from Ruegeria sp. (strain TM1040) (Silicibacter sp.).